A 322-amino-acid polypeptide reads, in one-letter code: Cysteine protease YopT (322 aa).

The disordered stretch occupies residues 43-72 (SHSNRQKKLSATIKHNQSSRSMLDRKLTSD). Residues Cys-139, His-258, and Asp-274 contribute to the active site.

The protein belongs to the peptidase C58 family. Interacts with human ARHA.

Its subcellular location is the secreted. Cysteine protease, which is translocated into infected cells and plays a central role in pathogenesis by cleaving the C-terminus end of the human small GTPase RhoA/ARHA, a regulator of cytoskeleton. Once cleaved, ARHA loses its lipid modification, and is released from the cell membrane, leading to the subsequent disruption of actin cytoskeleton of the host cell. This Yersinia enterocolitica protein is Cysteine protease YopT (yopT).